A 671-amino-acid chain; its full sequence is DNA ligase (671 aa).

Residues 32 to 36 (DAEYD), 81 to 82 (SL), and glutamate 113 each bind NAD(+). Lysine 115 serves as the catalytic N6-AMP-lysine intermediate. NAD(+)-binding residues include arginine 136, glutamate 173, lysine 290, and lysine 314. Zn(2+) is bound by residues cysteine 408, cysteine 411, cysteine 426, and cysteine 432. Residues 593–671 (EIDSPFAGKT…EAEMLRLLGS (79 aa)) form the BRCT domain.

Belongs to the NAD-dependent DNA ligase family. LigA subfamily. The cofactor is Mg(2+). It depends on Mn(2+) as a cofactor.

It carries out the reaction NAD(+) + (deoxyribonucleotide)n-3'-hydroxyl + 5'-phospho-(deoxyribonucleotide)m = (deoxyribonucleotide)n+m + AMP + beta-nicotinamide D-nucleotide.. DNA ligase that catalyzes the formation of phosphodiester linkages between 5'-phosphoryl and 3'-hydroxyl groups in double-stranded DNA using NAD as a coenzyme and as the energy source for the reaction. It is essential for DNA replication and repair of damaged DNA. In Escherichia coli (strain ATCC 8739 / DSM 1576 / NBRC 3972 / NCIMB 8545 / WDCM 00012 / Crooks), this protein is DNA ligase.